A 292-amino-acid polypeptide reads, in one-letter code: 4-diphosphocytidyl-2-C-methyl-D-erythritol kinase (292 aa).

Residue Lys20 is part of the active site. An ATP-binding site is contributed by 103–113 (PMGGGIGGGSS). Asp145 is an active-site residue.

The protein belongs to the GHMP kinase family. IspE subfamily.

The enzyme catalyses 4-CDP-2-C-methyl-D-erythritol + ATP = 4-CDP-2-C-methyl-D-erythritol 2-phosphate + ADP + H(+). It participates in isoprenoid biosynthesis; isopentenyl diphosphate biosynthesis via DXP pathway; isopentenyl diphosphate from 1-deoxy-D-xylulose 5-phosphate: step 3/6. Catalyzes the phosphorylation of the position 2 hydroxy group of 4-diphosphocytidyl-2C-methyl-D-erythritol. This Cupriavidus necator (strain ATCC 17699 / DSM 428 / KCTC 22496 / NCIMB 10442 / H16 / Stanier 337) (Ralstonia eutropha) protein is 4-diphosphocytidyl-2-C-methyl-D-erythritol kinase.